The primary structure comprises 843 residues: Aconitase AMT8-2 (843 aa).

D258–H260 contributes to the substrate binding site. Residues C450, C513, and C516 each coordinate [4Fe-4S] cluster. Substrate is bound by residues R536, R541, and S712–R713.

Belongs to the aconitase/IPM isomerase family.

It functions in the pathway mycotoxin biosynthesis. Its function is as follows. Aconitase; part of the gene clusters that mediate the biosynthesis of AM-toxins, host-selective toxins (HSTs) causing Alternaria blotch on apple, a worldwide distributed disease. AM-toxins are cyclic depsipeptides containing the 3 residues 2-hydroxy-isovaleric acid (2-HIV), dehydroalanine, L-alanine which are common for all 3 AM-toxins I to III. The fourth precursor is L-alpha-amino-methoxyphenyl-valeric acid (L-Amv) for AM-toxin I, L-alpha-amino-phenyl-valeric acid (L-Apv) for AM-toxin II, and L-alpha-amino-hydroxyphenyl-valeric acid (L-Ahv) for AM-toxin III. AM-toxins have two target sites for affecting susceptible apple cells; they cause invagination of the plasma membrane and electrolyte loss and chloroplast disorganization. The non-ribosomal peptide synthetase AMT1 contains 4 catalytic modules and is responsible for activation of each residue in AM-toxin. The aldo-keto reductase AMT2 catalyzes the conversion of 2-keto-isovaleric acid (2-KIV) to 2-hydroxy-isovaleric acid (2-HIV), one of the precursor residues incorporated by AMT1 during AM-toxin biosynthesis, by reduction of its ketone to an alcohol. The cytochrome P450 monooxygenase AMT3 and the thioesterase AMT4 are also important for AM-toxin production, but their exact function within the AM-toxin biosynthesis are not known yet. Up to 21 proteins (including AMT1 to AMT4) are predicted to be involved in AM-toxin biosynthesis since their expression ishighly up-regulated in AM-toxin-producing cultures. The sequence is that of Aconitase AMT8-2 from Alternaria alternata (Alternaria rot fungus).